The primary structure comprises 62 residues: Alpha-conotoxin ViIA (62 aa).

The first 18 residues, M1–S18, serve as a signal peptide directing secretion. Residues V19–L45 constitute a propeptide that is removed on maturation. 2 cysteine pairs are disulfide-bonded: C48–C54 and C49–C61.

It belongs to the conotoxin A superfamily. In terms of processing, the toxin is inactive on the alpha-3-beta-2 nAChR when the disulfide bond connectivity is C1-C4 and C2-C3 (ViIA-I) (IC(50)&gt;10000 nM). In terms of tissue distribution, expressed by the venom duct.

Its subcellular location is the secreted. In terms of biological role, alpha-conotoxins act on postsynaptic membranes, they bind to the nicotinic acetylcholine receptors (nAChR) and thus inhibit them. This toxin selectively inhibits nicotinic acetylcholine receptor (nAChR) alpha-3-beta-2 subtype (IC(50)=845.5 nM). The sequence is that of Alpha-conotoxin ViIA from Conus virgo (Virgin cone).